Reading from the N-terminus, the 323-residue chain is tRNA U34 carboxymethyltransferase (323 aa).

Carboxy-S-adenosyl-L-methionine contacts are provided by residues Lys91, Trp105, Lys110, Gly130, 152-154 (DPT), 181-182 (IE), Met196, Tyr200, and Arg315.

This sequence belongs to the class I-like SAM-binding methyltransferase superfamily. CmoB family. Homotetramer.

The enzyme catalyses carboxy-S-adenosyl-L-methionine + 5-hydroxyuridine(34) in tRNA = 5-carboxymethoxyuridine(34) in tRNA + S-adenosyl-L-homocysteine + H(+). Its function is as follows. Catalyzes carboxymethyl transfer from carboxy-S-adenosyl-L-methionine (Cx-SAM) to 5-hydroxyuridine (ho5U) to form 5-carboxymethoxyuridine (cmo5U) at position 34 in tRNAs. This chain is tRNA U34 carboxymethyltransferase, found in Escherichia coli (strain SE11).